The following is a 79-amino-acid chain: Putative membrane protein insertion efficiency factor (79 aa).

The protein belongs to the UPF0161 family.

It localises to the cell inner membrane. In terms of biological role, could be involved in insertion of integral membrane proteins into the membrane. The polypeptide is Putative membrane protein insertion efficiency factor (Prochlorococcus marinus (strain NATL2A)).